The sequence spans 213 residues: Ras-related protein Rab-25 (213 aa).

GTP is bound by residues S21, G24, K25, T26, N27, S38, H39, T43, and T44. Mg(2+) is bound at residue T26. 2 consecutive short sequence motifs (switch) follow at residues 35 to 49 (NEFSHDSRTTIGVEF) and 67 to 84 (DTAGLERYRAITSAYYRG). Residues T44 and D67 each contribute to the Mg(2+) site. Positions 70, 125, 126, 128, 156, and 157 each coordinate GTP. S-geranylgeranyl cysteine attachment occurs at residues C209 and C210. C210 is modified (cysteine methyl ester). The propeptide at 211–213 (ISL) is removed in mature form.

This sequence belongs to the small GTPase superfamily. Rab family. Interacts (GTP-bound form) with RAB11FIP1, RAB11FIP2, RAB11FIP3 and RAB11FIP4. Interacts (via the hypervariable C-terminal region) with ITGB1 (via the cytoplasmic region); the interaction is GTP-dependent. Interacts with ITGAV. Associates with the integrin alpha-V/beta-1 heterodimer. Interacts with VPS33B. Requires Mg(2+) as cofactor. In terms of tissue distribution, expression is restricted to epithelial cells. Expressed in ovarian epithelium (NOE) and breast tissue. Expressed in ovarian cancer; expression is increased relative to NOE cells. Expression in ovarian cancer is stage dependent, with stage III and stage IV showing higher levels than early stage cancers. Expressed in breast cancer; expression is increased relative to normal breast tissue.

The protein resides in the cell membrane. The protein localises to the cytoplasmic vesicle. It is found in the cell projection. It localises to the pseudopodium membrane. It catalyses the reaction GTP + H2O = GDP + phosphate + H(+). Regulated by guanine nucleotide exchange factors (GEFs) which promote the exchange of bound GDP for free GTP. Regulated by GTPase activating proteins (GAPs) which increase the GTP hydrolysis activity. Inhibited by GDP dissociation inhibitors (GDIs) which prevent Rab-GDP dissociation. Functionally, the small GTPases Rab are key regulators of intracellular membrane trafficking, from the formation of transport vesicles to their fusion with membranes. Rabs cycle between an inactive GDP-bound form and an active GTP-bound form that is able to recruit to membranes different set of downstream effectors directly responsible for vesicle formation, movement, tethering and fusion. RAB25 regulates epithelial cell differentiation, proliferation and survival, thereby playing key roles in tumorigenesis. Promotes invasive migration of cells in which it functions to localize and maintain integrin alpha-V/beta-1 at the tips of extending pseudopodia. Involved in the regulation of epithelial morphogenesis through the control of CLDN4 expression and localization at tight junctions. May selectively regulate the apical recycling pathway. Together with MYO5B regulates transcytosis. This is Ras-related protein Rab-25 from Homo sapiens (Human).